We begin with the raw amino-acid sequence, 429 residues long: MIRPRDELGTATTDSAQKIVLLGSGELGKEIAIEAQRLGVEVIAVDRYANAPAMQIAHRSYVGDMRKADFLFSVVEREKPDAIIPEIEAINLDALFELEKDGYFVVPNAKATWIAMHRERTRETLAREAKVPTSRYTYASTLDELYEACEKIGYPCHTKAIMSSSGKGSYFVKGPEDVPKAWEEAKKKARGSAEKLIVEEHIDFDVEITELAVRHYDENGEVVTTFPKPVGHYQIDGDYHSSWQPAEISERAEREVYRIAKRITDVLGGLGIFGVEMFVKGDKVWANEVSPRPHDTGMVTLASHPTGFSEFGLHLRAVLGLPIPGEWVDGYRLFPMLTPAATHVIKANVSGYSPRFRGLAKALSVPNATVRLFGKPEAYPGRRLGVAIAWDKDVGEAKRKAEMVAHSIELRTRSANWHSQDYEKRKHLL.

N(1)-(5-phospho-beta-D-ribosyl)glycinamide-binding positions include 26-27 (EL) and Glu86. Residues Arg118, Lys159, 199 to 202 (EEHI), and Glu207 contribute to the ATP site. One can recognise an ATP-grasp domain in the interval 123-319 (ETLAREAKVP…EFGLHLRAVL (197 aa)). Positions 276 and 288 each coordinate Mg(2+). N(1)-(5-phospho-beta-D-ribosyl)glycinamide-binding positions include Asp295, Lys375, and 382–383 (RR).

The protein belongs to the PurK/PurT family. As to quaternary structure, homodimer.

The catalysed reaction is N(1)-(5-phospho-beta-D-ribosyl)glycinamide + formate + ATP = N(2)-formyl-N(1)-(5-phospho-beta-D-ribosyl)glycinamide + ADP + phosphate + H(+). Its pathway is purine metabolism; IMP biosynthesis via de novo pathway; N(2)-formyl-N(1)-(5-phospho-D-ribosyl)glycinamide from N(1)-(5-phospho-D-ribosyl)glycinamide (formate route): step 1/1. Functionally, involved in the de novo purine biosynthesis. Catalyzes the transfer of formate to 5-phospho-ribosyl-glycinamide (GAR), producing 5-phospho-ribosyl-N-formylglycinamide (FGAR). Formate is provided by PurU via hydrolysis of 10-formyl-tetrahydrofolate. This chain is Formate-dependent phosphoribosylglycinamide formyltransferase, found in Thermococcus kodakarensis (strain ATCC BAA-918 / JCM 12380 / KOD1) (Pyrococcus kodakaraensis (strain KOD1)).